The primary structure comprises 35 residues: NEVCPPGECQQYCCDLRKCKCINLSFYGLTCNCDS.

Contains 4 disulfide bonds. In terms of tissue distribution, expressed by the venom duct.

It is found in the secreted. This chain is Augerpeptide hheTx4, found in Hastula hectica (Sea snail).